A 229-amino-acid chain; its full sequence is Large ribosomal subunit protein uL1 (229 aa).

This sequence belongs to the universal ribosomal protein uL1 family. As to quaternary structure, part of the 50S ribosomal subunit.

Its function is as follows. Binds directly to 23S rRNA. The L1 stalk is quite mobile in the ribosome, and is involved in E site tRNA release. Protein L1 is also a translational repressor protein, it controls the translation of the L11 operon by binding to its mRNA. The polypeptide is Large ribosomal subunit protein uL1 (Chlorobium chlorochromatii (strain CaD3)).